Here is a 151-residue protein sequence, read N- to C-terminus: SsrA-binding protein (151 aa).

Belongs to the SmpB family.

Its subcellular location is the cytoplasm. Required for rescue of stalled ribosomes mediated by trans-translation. Binds to transfer-messenger RNA (tmRNA), required for stable association of tmRNA with ribosomes. tmRNA and SmpB together mimic tRNA shape, replacing the anticodon stem-loop with SmpB. tmRNA is encoded by the ssrA gene; the 2 termini fold to resemble tRNA(Ala) and it encodes a 'tag peptide', a short internal open reading frame. During trans-translation Ala-aminoacylated tmRNA acts like a tRNA, entering the A-site of stalled ribosomes, displacing the stalled mRNA. The ribosome then switches to translate the ORF on the tmRNA; the nascent peptide is terminated with the 'tag peptide' encoded by the tmRNA and targeted for degradation. The ribosome is freed to recommence translation, which seems to be the essential function of trans-translation. This chain is SsrA-binding protein, found in Chlamydia trachomatis serovar A (strain ATCC VR-571B / DSM 19440 / HAR-13).